The sequence spans 291 residues: Lipoyl synthase (291 aa).

7 residues coordinate [4Fe-4S] cluster: Cys-35, Cys-40, Cys-46, Cys-61, Cys-65, Cys-68, and Ser-273. In terms of domain architecture, Radical SAM core spans 47 to 262 (FGKRQATFLI…KERALTMGFE (216 aa)).

This sequence belongs to the radical SAM superfamily. Lipoyl synthase family. It depends on [4Fe-4S] cluster as a cofactor.

The protein resides in the cytoplasm. It carries out the reaction [[Fe-S] cluster scaffold protein carrying a second [4Fe-4S](2+) cluster] + N(6)-octanoyl-L-lysyl-[protein] + 2 oxidized [2Fe-2S]-[ferredoxin] + 2 S-adenosyl-L-methionine + 4 H(+) = [[Fe-S] cluster scaffold protein] + N(6)-[(R)-dihydrolipoyl]-L-lysyl-[protein] + 4 Fe(3+) + 2 hydrogen sulfide + 2 5'-deoxyadenosine + 2 L-methionine + 2 reduced [2Fe-2S]-[ferredoxin]. The protein operates within protein modification; protein lipoylation via endogenous pathway; protein N(6)-(lipoyl)lysine from octanoyl-[acyl-carrier-protein]: step 2/2. In terms of biological role, catalyzes the radical-mediated insertion of two sulfur atoms into the C-6 and C-8 positions of the octanoyl moiety bound to the lipoyl domains of lipoate-dependent enzymes, thereby converting the octanoylated domains into lipoylated derivatives. This is Lipoyl synthase from Citrifermentans bemidjiense (strain ATCC BAA-1014 / DSM 16622 / JCM 12645 / Bem) (Geobacter bemidjiensis).